Here is a 548-residue protein sequence, read N- to C-terminus: Chaperonin GroEL (548 aa).

Residues 30–33 (TLGP), lysine 51, 87–91 (DGTTT), glycine 415, 478–480 (NAA), and aspartate 494 contribute to the ATP site.

It belongs to the chaperonin (HSP60) family. In terms of assembly, forms a cylinder of 14 subunits composed of two heptameric rings stacked back-to-back. Interacts with the co-chaperonin GroES.

It localises to the cytoplasm. It catalyses the reaction ATP + H2O + a folded polypeptide = ADP + phosphate + an unfolded polypeptide.. Its function is as follows. Together with its co-chaperonin GroES, plays an essential role in assisting protein folding. The GroEL-GroES system forms a nano-cage that allows encapsulation of the non-native substrate proteins and provides a physical environment optimized to promote and accelerate protein folding. This is Chaperonin GroEL from Janthinobacterium sp. (strain Marseille) (Minibacterium massiliensis).